The chain runs to 453 residues: MGVKTFTHSSSSHSQEMLGKLNMLRNDGHFCDITIRVQDRIFRAHKVVLAACSDFFRTKLVGQTEDENKNVLDLHHVTVTGFIPLLEYAYTATLSINTENIIDVLAAASYMQMFSVASTCSEFMKSSILWNTPNSQPEKGLDAGQENSSNCNFTSRDGSISPVSSECSAVERTIPVCRESRRKRKSYIVMSPESPVKCSTQTNSPQVLNSSASYAENRNQPVDSSLAFPWTFPFGIDRRIQPEKAKQAENTRTLELPGPSEAGRRMADYVTCESTKTTLPLGTEEDVRVKVERLSDEEVHEEVSQPVSASQSSLSDQQTVPGSEPVQEDLLISPQSSSIGSVDEGVTEGLPTLQSTSSTNAHADEDDRLENVQYPYQLYIAPSTSSTERPSPNGPDRPFQCPTCGVRFTRIQNLKQHMLIHSGIKPFQCDCCGKKFTRAYSLKMHRLKHEVIS.

Residue Lys4 forms a Glycyl lysine isopeptide (Lys-Gly) (interchain with G-Cter in SUMO2) linkage. Positions 31–98 (CDITIRVQDR…AYTATLSINT (68 aa)) constitute a BTB domain. Residues Ser135, Ser159, Ser161, Ser165, Ser191, Ser194, and Ser199 each carry the phosphoserine modification. The residue at position 200 (Thr200) is a Phosphothreonine. The segment at 241–265 (QPEKAKQAENTRTLELPGPSEAGRR) is disordered. A Glycyl lysine isopeptide (Lys-Gly) (interchain with G-Cter in SUMO2) cross-link involves residue Lys290. 2 disordered regions span residues 295–324 (SDEE…PGSE) and 336–368 (SSSI…EDDR). Positions 304–318 (SQPVSASQSSLSDQQ) are enriched in low complexity. The segment covering 352 to 361 (TLQSTSSTNA) has biased composition (polar residues). C2H2-type zinc fingers lie at residues 399-421 (FQCP…MLIH) and 427-449 (FQCD…RLKH).

The protein localises to the nucleus. This Rattus norvegicus (Rat) protein is Zinc finger and BTB domain-containing protein 44 (Zbtb44).